A 750-amino-acid polypeptide reads, in one-letter code: uncharacterized protein (750 aa).

This is an uncharacterized protein from Escherichia coli (strain K12).